The primary structure comprises 295 residues: Protease HtpX (295 aa).

The next 2 helical transmembrane spans lie at 4 to 24 (ILLF…TLSL) and 41 to 61 (SQLL…SLFI). Residue His-147 participates in Zn(2+) binding. Residue Glu-148 is part of the active site. Position 151 (His-151) interacts with Zn(2+). 2 consecutive transmembrane segments (helical) span residues 158 to 178 (VTLA…ARII) and 199 to 219 (IATI…VMWF). A Zn(2+)-binding site is contributed by Glu-224.

This sequence belongs to the peptidase M48B family. Zn(2+) serves as cofactor.

It is found in the cell inner membrane. The chain is Protease HtpX from Pseudomonas fluorescens (strain Pf0-1).